Reading from the N-terminus, the 676-residue chain is Translation initiation factor IF-2, mitochondrial (676 aa).

In terms of domain architecture, tr-type G spans 143–326; that stretch reads KRAPVVTIMG…MDIRAENSPK (184 aa). Positions 152-159 are G1; that stretch reads GHVDHGKT. 152 to 159 contacts GTP; it reads GHVDHGKT. The G2 stretch occupies residues 177–181; that stretch reads GITQH. GTP is bound by residues 200–203 and 254–257; these read DTPG and TKID. The interval 200–203 is G3; sequence DTPG. The interval 254–257 is G4; the sequence is TKID. The tract at residues 296–298 is G5; that stretch reads SAK.

It belongs to the TRAFAC class translation factor GTPase superfamily. Classic translation factor GTPase family. IF-2 subfamily.

The protein localises to the mitochondrion. In terms of biological role, one of the essential components for the initiation of protein synthesis. Protects formylmethionyl-tRNA from spontaneous hydrolysis and promotes its binding to the 30S ribosomal subunits. Also involved in the hydrolysis of GTP during the formation of the 70S ribosomal complex. The protein is Translation initiation factor IF-2, mitochondrial (IFM1) of Saccharomyces cerevisiae (strain ATCC 204508 / S288c) (Baker's yeast).